The chain runs to 288 residues: Chemotaxis protein methyltransferase 2 (288 aa).

One can recognise a CheR-type methyltransferase domain in the interval 1–280 (MNEIVITDTD…TGYYKPHKGK (280 aa)). S-adenosyl-L-methionine contacts are provided by residues asparagine 76, threonine 78, arginine 82, glutamate 119, aspartate 145, 200–201 (NL), and 219–220 (RN).

It carries out the reaction L-glutamyl-[protein] + S-adenosyl-L-methionine = [protein]-L-glutamate 5-O-methyl ester + S-adenosyl-L-homocysteine. Functionally, methylation of the membrane-bound methyl-accepting chemotaxis proteins (MCP) to form gamma-glutamyl methyl ester residues in MCP. This Vibrio cholerae serotype O1 (strain ATCC 39315 / El Tor Inaba N16961) protein is Chemotaxis protein methyltransferase 2 (cheR2).